The sequence spans 1005 residues: Protein TIC 214 (1005 aa).

6 consecutive transmembrane segments (helical) span residues 25 to 45, 67 to 87, 91 to 111, 131 to 151, 177 to 197, and 304 to 324; these read VGLY…LFLL, FFTG…HLAL, HTIL…SNSG, SFQL…SVLG, FVGW…VFVW, and LFSI…PLLY. Disordered stretches follow at residues 457-481 and 767-833; these read VEEG…EREE and KKKK…KRKQ. Residues 783 to 810 are compositionally biased toward basic residues; it reads KQKKVKSKQKKVKSKQKKVKSKQKKVKS. Positions 811-824 are enriched in basic and acidic residues; the sequence is KQNEIKSKQNEIKS.

It belongs to the TIC214 family. In terms of assembly, part of the Tic complex.

Its subcellular location is the plastid. It is found in the chloroplast inner membrane. In terms of biological role, involved in protein precursor import into chloroplasts. May be part of an intermediate translocation complex acting as a protein-conducting channel at the inner envelope. In Oenothera berteroana (Bertero's evening primrose), this protein is Protein TIC 214.